We begin with the raw amino-acid sequence, 235 residues long: Replication protein (235 aa).

Tyr-149 lines the DNA pocket.

It belongs to the Gram-positive plasmids replication protein type 1 family.

Functionally, produces a single-strand nick in a specific site of the plasmid, and this nick results in single-strand replication by rolling circle mechanism. This chain is Replication protein (repB), found in Bacillus sp.